The primary structure comprises 140 residues: ATP synthase epsilon chain (140 aa).

It belongs to the ATPase epsilon chain family. In terms of assembly, F-type ATPases have 2 components, CF(1) - the catalytic core - and CF(0) - the membrane proton channel. CF(1) has five subunits: alpha(3), beta(3), gamma(1), delta(1), epsilon(1). CF(0) has three main subunits: a, b and c.

The protein resides in the cell inner membrane. Produces ATP from ADP in the presence of a proton gradient across the membrane. The protein is ATP synthase epsilon chain of Nitrosococcus oceani (strain ATCC 19707 / BCRC 17464 / JCM 30415 / NCIMB 11848 / C-107).